The following is a 336-amino-acid chain: Geranylgeranyl pyrophosphate synthase 6, mitochondrial (336 aa).

The N-terminal 22 residues, 1-22 (MRPRYSLILSAMRLIRPSNRRL), are a transit peptide targeting the mitochondrion. Lys80, Arg83, and His112 together coordinate isopentenyl diphosphate. Asp119 and Asp125 together coordinate Mg(2+). Arg130 is a dimethylallyl diphosphate binding site. Isopentenyl diphosphate is bound at residue Arg131. Positions 221, 222, 259, 276, and 286 each coordinate dimethylallyl diphosphate.

The protein belongs to the FPP/GGPP synthase family. As to quaternary structure, monomer. Mg(2+) serves as cofactor.

It is found in the mitochondrion. The catalysed reaction is isopentenyl diphosphate + dimethylallyl diphosphate = (2E)-geranyl diphosphate + diphosphate. It catalyses the reaction isopentenyl diphosphate + (2E)-geranyl diphosphate = (2E,6E)-farnesyl diphosphate + diphosphate. The enzyme catalyses isopentenyl diphosphate + (2E,6E)-farnesyl diphosphate = (2E,6E,10E)-geranylgeranyl diphosphate + diphosphate. Its pathway is isoprenoid biosynthesis; farnesyl diphosphate biosynthesis; farnesyl diphosphate from geranyl diphosphate and isopentenyl diphosphate: step 1/1. It participates in isoprenoid biosynthesis; geranyl diphosphate biosynthesis; geranyl diphosphate from dimethylallyl diphosphate and isopentenyl diphosphate: step 1/1. The protein operates within isoprenoid biosynthesis; geranylgeranyl diphosphate biosynthesis; geranylgeranyl diphosphate from farnesyl diphosphate and isopentenyl diphosphate: step 1/1. Functionally, catalyzes the trans-addition of the three molecules of IPP onto DMAPP to form geranylgeranyl pyrophosphate. This chain is Geranylgeranyl pyrophosphate synthase 6, mitochondrial, found in Arabidopsis thaliana (Mouse-ear cress).